The following is a 167-amino-acid chain: Piercer of microtubule wall 1 protein (167 aa).

The tract at residues methionine 1 to lysine 54 is disordered. The span at glycine 16 to lysine 54 shows a compositional bias: basic and acidic residues.

Belongs to the PIERCE1 family. In terms of assembly, microtubule inner protein component of sperm flagellar doublet microtubules. Interacts with CFAP53, ODAD1 and ODAD3; the interactions link the outer dynein arms docking complex (ODA-DC) to the internal microtubule inner proteins (MIP) in cilium axoneme. Expressed in brain, lung, kidney and testis.

Its subcellular location is the cytoplasm. The protein localises to the cytoskeleton. The protein resides in the cilium axoneme. It localises to the flagellum axoneme. Functionally, microtubule inner protein involved in the attachment of outer dynein arms (ODAs) to dynein-decorated doublet microtubules (DMTs) in cilia axoneme. Functions at the initial step of left-right asymmetry specification of the visceral organs. This is Piercer of microtubule wall 1 protein from Mus musculus (Mouse).